A 106-amino-acid chain; its full sequence is Transcription initiation factor IIA subunit 2 (106 aa).

The protein belongs to the TFIIA subunit 2 family. As to quaternary structure, TFIIA is a heterodimer of the large unprocessed subunit 1 and a small subunit gamma. It was originally believed to be a heterotrimer of an alpha, a beta and a gamma subunit.

It is found in the nucleus. Functionally, TFIIA is a component of the transcription machinery of RNA polymerase II and plays an important role in transcriptional activation. TFIIA in a complex with TBP mediates transcriptional activity. The sequence is that of Transcription initiation factor IIA subunit 2 (TFIIA-S) from Arabidopsis thaliana (Mouse-ear cress).